A 904-amino-acid polypeptide reads, in one-letter code: Phosphoenolpyruvate carboxylase (904 aa).

Active-site residues include H151 and K570.

Belongs to the PEPCase type 1 family. Requires Mg(2+) as cofactor.

The enzyme catalyses oxaloacetate + phosphate = phosphoenolpyruvate + hydrogencarbonate. In terms of biological role, forms oxaloacetate, a four-carbon dicarboxylic acid source for the tricarboxylic acid cycle. In Xanthomonas campestris pv. campestris (strain ATCC 33913 / DSM 3586 / NCPPB 528 / LMG 568 / P 25), this protein is Phosphoenolpyruvate carboxylase.